The primary structure comprises 314 residues: THAP domain-containing protein 11 (314 aa).

The segment at 1-80 (MPGFTCCVPG…TYTVRVPTIF (80 aa)) adopts a THAP-type zinc-finger fold. Residues 85–111 (VNERKVARRPAGAAAARRRQQQQQQQQ) are disordered. A compositionally biased stretch (low complexity) spans 93–111 (RPAGAAAARRRQQQQQQQQ). An HCFC1-binding motif (HBM) motif is present at residues 243–246 (DHSY). Positions 255–305 (EELLRKLNEQRDILALMEVKMKEMKGSIRHLRLTEAKLREELREKDRLLAM) form a coiled coil.

This sequence belongs to the THAP11 family. In terms of assembly, forms homodimers. Interacts via HBM with HCFC1. Forms a complex with HCFC1 and ZNF143. Expressed in skin fibroblasts.

The protein resides in the nucleus. It localises to the cytoplasm. Transcription factor, which has both transcriptional activation and repression activities. Also modulates chromatin accessibility. In complex with HCFC1 and ZNF143, regulates the expression of several genes, including AP2S1, ESCO2, OPHN1, RBL1, UBXN8 and ZNF32. May regulate the expression of genes that encode both cytoplasmic and mitochondrial ribosomal proteins. Required for normal mitochondrial development and function. Regulates mitochondrial gene expression, including that of components of the electron transport chain. Involved in the maintainance of pluripotency in early embryonic cells, possibly through its action on mitochondrial maturation which is required to meet high energy demands of these cells. Required for early development of retina, preventing premature exit of retinal progenitor cells from the cell cycle. This effect may also be mediated by its action on mitochondria. Through the regulation of MMACHC gene expression, controls cobalamin metabolism. Required for normal brain development and neural precursor differentiation. Involved in cell growth. In Homo sapiens (Human), this protein is THAP domain-containing protein 11 (THAP11).